A 238-amino-acid polypeptide reads, in one-letter code: Pyridoxine 5'-phosphate synthase (238 aa).

2 residues coordinate 3-amino-2-oxopropyl phosphate: Asn7 and Arg18. His43 functions as the Proton acceptor in the catalytic mechanism. 1-deoxy-D-xylulose 5-phosphate-binding residues include Arg45 and His50. Glu70 functions as the Proton acceptor in the catalytic mechanism. Thr100 serves as a coordination point for 1-deoxy-D-xylulose 5-phosphate. His190 acts as the Proton donor in catalysis. Residues Asp191 and 213 to 214 (GH) each bind 3-amino-2-oxopropyl phosphate.

The protein belongs to the PNP synthase family. In terms of assembly, homooctamer; tetramer of dimers.

It localises to the cytoplasm. It carries out the reaction 3-amino-2-oxopropyl phosphate + 1-deoxy-D-xylulose 5-phosphate = pyridoxine 5'-phosphate + phosphate + 2 H2O + H(+). Its pathway is cofactor biosynthesis; pyridoxine 5'-phosphate biosynthesis; pyridoxine 5'-phosphate from D-erythrose 4-phosphate: step 5/5. Its function is as follows. Catalyzes the complicated ring closure reaction between the two acyclic compounds 1-deoxy-D-xylulose-5-phosphate (DXP) and 3-amino-2-oxopropyl phosphate (1-amino-acetone-3-phosphate or AAP) to form pyridoxine 5'-phosphate (PNP) and inorganic phosphate. In Porphyromonas gingivalis (strain ATCC 33277 / DSM 20709 / CIP 103683 / JCM 12257 / NCTC 11834 / 2561), this protein is Pyridoxine 5'-phosphate synthase.